Here is a 537-residue protein sequence, read N- to C-terminus: CTP synthase (537 aa).

The amidoligase domain stretch occupies residues 1–265; sequence MTKYIFVTGG…GKYLTKRLKL (265 aa). Ser-13 lines the CTP pocket. Residue Ser-13 coordinates UTP. 14 to 19 contacts ATP; that stretch reads GLGKGI. Tyr-54 serves as a coordination point for L-glutamine. ATP is bound at residue Asp-71. The Mg(2+) site is built by Asp-71 and Glu-139. CTP-binding positions include 146–148, 186–191, and Lys-222; these read DIE and KTKPTQ. UTP is bound by residues 186–191 and Lys-222; that span reads KTKPTQ. Residues 290-532 form the Glutamine amidotransferase type-1 domain; the sequence is EIAIVGKYVK…VRAAKEYKQE (243 aa). Position 351 (Gly-351) interacts with L-glutamine. Cys-378 (nucleophile; for glutamine hydrolysis) is an active-site residue. L-glutamine-binding positions include 379–382, Glu-402, and Arg-459; that span reads FGFQ. Catalysis depends on residues His-505 and Glu-507.

It belongs to the CTP synthase family. As to quaternary structure, homotetramer.

It carries out the reaction UTP + L-glutamine + ATP + H2O = CTP + L-glutamate + ADP + phosphate + 2 H(+). The catalysed reaction is L-glutamine + H2O = L-glutamate + NH4(+). The enzyme catalyses UTP + NH4(+) + ATP = CTP + ADP + phosphate + 2 H(+). It functions in the pathway pyrimidine metabolism; CTP biosynthesis via de novo pathway; CTP from UDP: step 2/2. With respect to regulation, allosterically activated by GTP, when glutamine is the substrate; GTP has no effect on the reaction when ammonia is the substrate. The allosteric effector GTP functions by stabilizing the protein conformation that binds the tetrahedral intermediate(s) formed during glutamine hydrolysis. Inhibited by the product CTP, via allosteric rather than competitive inhibition. Catalyzes the ATP-dependent amination of UTP to CTP with either L-glutamine or ammonia as the source of nitrogen. Regulates intracellular CTP levels through interactions with the four ribonucleotide triphosphates. This is CTP synthase from Pyrococcus furiosus (strain ATCC 43587 / DSM 3638 / JCM 8422 / Vc1).